The primary structure comprises 34 residues: Photosystem II reaction center protein M (34 aa).

A helical transmembrane segment spans residues 5–25 (ILAFIATALFILVPTAFLLII).

Belongs to the PsbM family. As to quaternary structure, PSII is composed of 1 copy each of membrane proteins PsbA, PsbB, PsbC, PsbD, PsbE, PsbF, PsbH, PsbI, PsbJ, PsbK, PsbL, PsbM, PsbT, PsbX, PsbY, PsbZ, Psb30/Ycf12, at least 3 peripheral proteins of the oxygen-evolving complex and a large number of cofactors. It forms dimeric complexes.

The protein resides in the plastid. Its subcellular location is the chloroplast thylakoid membrane. In terms of biological role, one of the components of the core complex of photosystem II (PSII). PSII is a light-driven water:plastoquinone oxidoreductase that uses light energy to abstract electrons from H(2)O, generating O(2) and a proton gradient subsequently used for ATP formation. It consists of a core antenna complex that captures photons, and an electron transfer chain that converts photonic excitation into a charge separation. This subunit is found at the monomer-monomer interface. This is Photosystem II reaction center protein M from Calycanthus floridus var. glaucus (Eastern sweetshrub).